Reading from the N-terminus, the 228-residue chain is Probable septum site-determining protein MinC (228 aa).

It belongs to the MinC family. In terms of assembly, interacts with MinD and FtsZ.

Functionally, cell division inhibitor that blocks the formation of polar Z ring septums. Rapidly oscillates between the poles of the cell to destabilize FtsZ filaments that have formed before they mature into polar Z rings. Prevents FtsZ polymerization. This chain is Probable septum site-determining protein MinC, found in Bacillus cytotoxicus (strain DSM 22905 / CIP 110041 / 391-98 / NVH 391-98).